A 566-amino-acid chain; its full sequence is Putative lipase ATG15 (566 aa).

The Cytoplasmic segment spans residues 1–17 (MGSKHKKNASKSLRAFS). A helical; Signal-anchor for type II membrane protein membrane pass occupies residues 18 to 38 (FIILSASIALVYIFNPVKLIF). Residues 39–566 (PSSIIRFHHG…CVEWGDEEDA (528 aa)) lie on the Lumenal side of the membrane. Residues Asn264 and Asn348 are each glycosylated (N-linked (GlcNAc...) asparagine). The Charge relay system role is filled by Ser366. Residue Asn483 is glycosylated (N-linked (GlcNAc...) asparagine). Residues 507-545 (DSLDDEPPLPNPLRPGKPSTTSSSQHHTSTTTTTETSRP) are disordered. The segment covering 522–543 (GKPSTTSSSQHHTSTTTTTETS) has biased composition (low complexity).

This sequence belongs to the AB hydrolase superfamily. Lipase family. In terms of assembly, binds to both phosphatidylinositol (PI) and phosphatidylinositol 3,5-bisphosphate (PIP2).

It is found in the endosome. It localises to the multivesicular body membrane. The protein resides in the prevacuolar compartment membrane. It catalyses the reaction a triacylglycerol + H2O = a diacylglycerol + a fatty acid + H(+). Lipase which is essential for lysis of subvacuolar cytoplasm to vacuole targeted bodies and intravacuolar autophagic bodies. Involved in the lysis of intravacuolar multivesicular body (MVB) vesicles. The intravacuolar membrane disintegration by ATG15 is critical to life span extension. This chain is Putative lipase ATG15 (ATG15), found in Meyerozyma guilliermondii (strain ATCC 6260 / CBS 566 / DSM 6381 / JCM 1539 / NBRC 10279 / NRRL Y-324) (Yeast).